Reading from the N-terminus, the 199-residue chain is Protein-L-isoaspartate O-methyltransferase (199 aa).

S51 is a catalytic residue.

The protein belongs to the methyltransferase superfamily. L-isoaspartyl/D-aspartyl protein methyltransferase family.

Its subcellular location is the cytoplasm. It catalyses the reaction [protein]-L-isoaspartate + S-adenosyl-L-methionine = [protein]-L-isoaspartate alpha-methyl ester + S-adenosyl-L-homocysteine. Catalyzes the methyl esterification of L-isoaspartyl residues in peptides and proteins that result from spontaneous decomposition of normal L-aspartyl and L-asparaginyl residues. It plays a role in the repair and/or degradation of damaged proteins. In Fervidobacterium nodosum (strain ATCC 35602 / DSM 5306 / Rt17-B1), this protein is Protein-L-isoaspartate O-methyltransferase.